The chain runs to 806 residues: Sucrose synthase (806 aa).

Residues 275–752 (MVFNVVILSP…GLQRIEEKYT (478 aa)) form a GT-B glycosyltransferase region.

This sequence belongs to the glycosyltransferase 1 family. Plant sucrose synthase subfamily.

It catalyses the reaction an NDP-alpha-D-glucose + D-fructose = a ribonucleoside 5'-diphosphate + sucrose + H(+). In terms of biological role, sucrose-cleaving enzyme that provides UDP-glucose and fructose for various metabolic pathways. In Vicia faba (Broad bean), this protein is Sucrose synthase (SUCS).